The chain runs to 415 residues: Gamma-glutamyl phosphate reductase (415 aa).

This sequence belongs to the gamma-glutamyl phosphate reductase family.

The protein localises to the cytoplasm. It carries out the reaction L-glutamate 5-semialdehyde + phosphate + NADP(+) = L-glutamyl 5-phosphate + NADPH + H(+). The protein operates within amino-acid biosynthesis; L-proline biosynthesis; L-glutamate 5-semialdehyde from L-glutamate: step 2/2. Catalyzes the NADPH-dependent reduction of L-glutamate 5-phosphate into L-glutamate 5-semialdehyde and phosphate. The product spontaneously undergoes cyclization to form 1-pyrroline-5-carboxylate. The chain is Gamma-glutamyl phosphate reductase from Pseudoalteromonas translucida (strain TAC 125).